The primary structure comprises 476 residues: Exoglucanase-6A (476 aa).

The N-terminal stretch at 1–16 is a signal peptide; it reads MAKFFLTAAFAAAALA. 2 disulfides stabilise this stretch: C33/C50 and C44/C60. Residues 33–60 form the CBM1 domain; it reads CGGIGFNGPTCCQSGSTCVKQNDWYSQC. The interval 67-94 is disordered; it reads TTTSTTSTSSSSTTSRATSTTRTGGVTS. An O-linked (Man...) threonine glycan is attached at T144. S153 carries an O-linked (Man...) serine glycan. Substrate is bound by residues W163 and D165. N-linked (GlcNAc...) asparagine glycosylation occurs at N167. Residues 200 to 222 form a substrate binding loop 1 region; that stretch reads YDLPDRDCAAAASNGEWAIANNG. Residue D252 is the Proton donor of the active site. Substrate is bound by residues H297, W300, N336, W397, K425, and E429. The tract at residues 423–461 is substrate binding loop 2; the sequence is WVKPGGECDGTSDTTAARYDYHCGLEDALKPAPEAGQWF. Residue D431 is the Proton acceptor of the active site.

This sequence belongs to the glycosyl hydrolase 6 (cellulase A) family. In terms of assembly, monomer.

The enzyme catalyses Hydrolysis of (1-&gt;4)-beta-D-glucosidic linkages in cellulose and cellotetraose, releasing cellobiose from the non-reducing ends of the chains.. Functionally, plays a central role in the recycling of plant biomass. The biological conversion of cellulose to glucose generally requires three types of hydrolytic enzymes: (1) Endoglucanases which cut internal beta-1,4-glucosidic bonds; (2) Exocellobiohydrolases that cut the disaccharide cellobiose from the non-reducing end of the cellulose polymer chain; (3) Beta-1,4-glucosidases which hydrolyze the cellobiose and other short cello-oligosaccharides to glucose. This chain is Exoglucanase-6A, found in Humicola insolens (Soft-rot fungus).